A 927-amino-acid polypeptide reads, in one-letter code: Echinoderm microtubule-associated protein-like 4 (927 aa).

A microtubule-binding region spans residues 1–189 (MDGFAGSLDD…IPSDVENYDD (189 aa)). Positions 14–63 (AASTSDVQDRLSALELRVQQQEDEITVLKAALADVLRRLAISEDQVATVR) form a coiled coil. Residues 85-132 (NGGAGTRKPSHASSVAKKDTLSSAAKSVKRSSTLEKSHNSWDASEESR) form a disordered region. Residues 116-132 (STLEKSHNSWDASEESR) are compositionally biased toward basic and acidic residues. WD repeat units lie at residues 199–237 (LKLEWVFGYRGRDCRANVYLLPTGEIVYFIASVVVLFNY), 241–288 (TQRH…VWDS), 296–336 (VIGL…VWDW), 343–378 (AEIKTTNEVVLAVEFHPTDAGTIVTCGKSHIFFWTW), 385–424 (RKQGIFGKYEKPKFVQCLAFLANGDVLAGDSGGIMLIWSK), 442–480 (QISKQIKAHDGSVFTLCQMRNGMLLTGGGKDRKVIMWDH), 485–521 (EREIEVPDQYGTIRAVAEGKGDQFLVGTSRNFILRGT), 524–563 (DGFQVEVQGHTDELWGLATHPFKDLLLTCAQDKQVCLWNS), 567–604 (SLEWTRVLDEPGHCADFHPTGTVVAIGTHSGRWFVLDA), 610–646 (VSIHTDGNEQLSVMRYSVDGALLAVGSHDNFIYLYNV), 653–692 (YSRYGKCTGHSSYITHLDWSPDNQYIMSNSGDYEILYWDI), 702–760 (RSEC…LFQY), and 767–806 (APSHKYSAHSSHVTNVSFTHNDGHLISTGGKDMSIMQWRL). A compositionally biased stretch (polar residues) spans 815–829 (NDNIAESSSAVNSPV). The tract at residues 815–927 (NDNIAESSSA…NQDDDDAPLS (113 aa)) is disordered. The span at 914–927 (AQDENQDDDDAPLS) shows a compositional bias: acidic residues.

It belongs to the WD repeat EMAP family. Homotrimer; self-association is mediated by the N-terminal coiled coil.

It localises to the cytoplasm. It is found in the cytoskeleton. The protein resides in the spindle. The protein localises to the microtubule organizing center. Its subcellular location is the midbody. Functionally, essential for the formation and stability of microtubules (MTs). Required for the organization of the mitotic spindle and for the proper attachment of kinetochores to MTs. Promotes the recruitment of NUDC to the mitotic spindle for mitotic progression. This chain is Echinoderm microtubule-associated protein-like 4 (eml4), found in Xenopus laevis (African clawed frog).